Here is a 67-residue protein sequence, read N- to C-terminus: UPF0434 protein Patl_1782 (67 aa).

The protein belongs to the UPF0434 family.

This is UPF0434 protein Patl_1782 from Pseudoalteromonas atlantica (strain T6c / ATCC BAA-1087).